A 184-amino-acid chain; its full sequence is Ribosome maturation factor RimM (184 aa).

Residues 93–165 form the PRC barrel domain; it reads DEGWYEHELV…YILITPPSGL (73 aa).

The protein belongs to the RimM family. As to quaternary structure, binds ribosomal protein uS19.

It is found in the cytoplasm. Functionally, an accessory protein needed during the final step in the assembly of 30S ribosomal subunit, possibly for assembly of the head region. Essential for efficient processing of 16S rRNA. May be needed both before and after RbfA during the maturation of 16S rRNA. It has affinity for free ribosomal 30S subunits but not for 70S ribosomes. The polypeptide is Ribosome maturation factor RimM (Paenarthrobacter aurescens (strain TC1)).